Reading from the N-terminus, the 94-residue chain is ATP synthase F(0) complex subunit f, mitochondrial (94 aa).

At Ala-2 the chain carries N-acetylalanine. Ser-3 carries the post-translational modification Phosphoserine. N6-acetyllysine is present on Lys-22. A helical membrane pass occupies residues 68–85 (MVLACYVLFSYSFSYKHL).

This sequence belongs to the ATPase F chain family. As to quaternary structure, component of the ATP synthase complex composed at least of ATP5F1A/subunit alpha, ATP5F1B/subunit beta, ATP5MC1/subunit c (homooctomer), MT-ATP6/subunit a, MT-ATP8/subunit 8, ATP5ME/subunit e, ATP5MF/subunit f, ATP5MG/subunit g, ATP5MK/subunit k, ATP5MJ/subunit j, ATP5F1C/subunit gamma, ATP5F1D/subunit delta, ATP5F1E/subunit epsilon, ATP5PF/subunit F6, ATP5PB/subunit b, ATP5PD/subunit d, ATP5PO/subunit OSCP. ATP synthase complex consists of a soluble F(1) head domain (subunits alpha(3) and beta(3)) - the catalytic core - and a membrane F(0) domain - the membrane proton channel (subunits c, a, 8, e, f, g, k and j). These two domains are linked by a central stalk (subunits gamma, delta, and epsilon) rotating inside the F1 region and a stationary peripheral stalk (subunits F6, b, d, and OSCP).

It localises to the mitochondrion. It is found in the mitochondrion inner membrane. Functionally, subunit f, of the mitochondrial membrane ATP synthase complex (F(1)F(0) ATP synthase or Complex V) that produces ATP from ADP in the presence of a proton gradient across the membrane which is generated by electron transport complexes of the respiratory chain. ATP synthase complex consist of a soluble F(1) head domain - the catalytic core - and a membrane F(1) domain - the membrane proton channel. These two domains are linked by a central stalk rotating inside the F(1) region and a stationary peripheral stalk. During catalysis, ATP synthesis in the catalytic domain of F(1) is coupled via a rotary mechanism of the central stalk subunits to proton translocation. In vivo, can only synthesize ATP although its ATP hydrolase activity can be activated artificially in vitro. Part of the complex F(0) domain. The polypeptide is ATP synthase F(0) complex subunit f, mitochondrial (Pongo abelii (Sumatran orangutan)).